The following is a 377-amino-acid chain: Succinyl-diaminopimelate desuccinylase (377 aa).

Position 66 (His66) interacts with Zn(2+). The active site involves Asp68. Asp99 contacts Zn(2+). Glu133 acts as the Proton acceptor in catalysis. 3 residues coordinate Zn(2+): Glu134, Glu162, and His348.

This sequence belongs to the peptidase M20A family. DapE subfamily. Homodimer. Zn(2+) is required as a cofactor. It depends on Co(2+) as a cofactor.

The enzyme catalyses N-succinyl-(2S,6S)-2,6-diaminopimelate + H2O = (2S,6S)-2,6-diaminopimelate + succinate. The protein operates within amino-acid biosynthesis; L-lysine biosynthesis via DAP pathway; LL-2,6-diaminopimelate from (S)-tetrahydrodipicolinate (succinylase route): step 3/3. Its function is as follows. Catalyzes the hydrolysis of N-succinyl-L,L-diaminopimelic acid (SDAP), forming succinate and LL-2,6-diaminopimelate (DAP), an intermediate involved in the bacterial biosynthesis of lysine and meso-diaminopimelic acid, an essential component of bacterial cell walls. This is Succinyl-diaminopimelate desuccinylase from Chromobacterium violaceum (strain ATCC 12472 / DSM 30191 / JCM 1249 / CCUG 213 / NBRC 12614 / NCIMB 9131 / NCTC 9757 / MK).